The chain runs to 2027 residues: Dedicator of cytokinesis protein 3 (2027 aa).

Positions 6–67 (EEEKYGVVIC…PANYIHLKKA (62 aa)) constitute an SH3 domain. In terms of domain architecture, C2 DOCK-type spans 421–598 (RNDLYLTLEK…ESFFISTQLS (178 aa)). Residues 1225–1632 (KSEINKEEMY…LYHEFPGLDK (408 aa)) enclose the DOCKER domain. A Phosphoserine modification is found at Ser-1655. Disordered regions lie at residues 1672 to 1695 (GTGRHSSSSLSSHASSEAGNMMMM), 1731 to 1768 (SSSQASPSSSSLSSTHSAPSQMITSAPSSTRGSPSLPD), 1846 to 1925 (DTPP…DEGL), and 1971 to 2027 (PPKP…RGEQ). Composition is skewed to low complexity over residues 1676–1695 (HSSSSLSSHASSEAGNMMMM) and 1731–1751 (SSSQASPSSSSLSSTHSAPSQ). Over residues 1752–1763 (MITSAPSSTRGS) the composition is skewed to polar residues. Positions 1877–1899 (GSNSTLSGSASSGVSSLSESNFG) are enriched in low complexity. The SH3-binding signature appears at 1967 to 1973 (PPALPPK). Basic and acidic residues-rich tracts occupy residues 1981–1998 (ALEHDEGMLLREEAERPR) and 2011–2027 (VKEEQARLAWEHGRGEQ).

This sequence belongs to the DOCK family. In terms of assembly, interacts with presenilin proteins PSEN1 and PSEN2. Interacts with CRK. In terms of tissue distribution, expressed in brain, spinal cord, pituitary gland, testis. Not expressed in heart, liver, kidney, spleen and lung. In brain, it is highly expressed in the cerebral cortex and hippocampus, while it is absent in other tissues, except in spinal cord. In the cerebral cortex, it is found within the intermediate (III and IV) and deep (V and VI) layers, whereas it is weakly expressed in superficial layer I. It is also abundant in the piriform cortex. Within the hippocampus, it is expressed in the pyramidal neurons of the CA1, CA2, and CA3 regions and the dentate gyrus.

The protein localises to the cytoplasm. Functionally, potential guanine nucleotide exchange factor (GEF). GEF proteins activate some small GTPases by exchanging bound GDP for free GTP. Its interaction with presenilin proteins as well as its ability to stimulate Tau/MAPT phosphorylation suggest that it may be involved in Alzheimer disease. Ectopic expression in nerve cells decreases the secretion of amyloid-beta APBA1 protein and lowers the rate of cell-substratum adhesion, suggesting that it may affect the function of some small GTPase involved in the regulation of actin cytoskeleton or cell adhesion receptors. In Mus musculus (Mouse), this protein is Dedicator of cytokinesis protein 3 (Dock3).